A 95-amino-acid chain; its full sequence is MNINEMLKKAKRLQAEMEVEEKEIAKKEFVVKKQGIKVVMLGTRKIKTIEISPALIDPEDPELVQDLVMLAINEAIDIIDEEYDELGDKYSNTSI.

This sequence belongs to the YbaB/EbfC family. Homodimer.

It localises to the cytoplasm. The protein resides in the nucleoid. Binds to DNA and alters its conformation. May be involved in regulation of gene expression, nucleoid organization and DNA protection. The protein is Nucleoid-associated protein MARTH_orf159 of Metamycoplasma arthritidis (strain 158L3-1) (Mycoplasma arthritidis).